The following is a 456-amino-acid chain: Protein disulfide-isomerase TMX3 (456 aa).

Residues 1 to 29 (MANAVGRRSWAALRLCAAVILLDLAVCKG) form the signal peptide. The 102-residue stretch at 30-131 (FVEDLNESFK…KDDIIEFAHR (102 aa)) folds into the Thioredoxin domain. Residues 30-378 (FVEDLNESFK…TIVSIFKSSP (349 aa)) lie on the Lumenal side of the membrane. Asparagine 35 carries N-linked (GlcNAc...) asparagine glycosylation. Catalysis depends on nucleophile residues cysteine 56 and cysteine 59. A disulfide bridge connects residues cysteine 56 and cysteine 59. N-linked (GlcNAc...) asparagine glycans are attached at residues asparagine 261 and asparagine 316. The chain crosses the membrane as a helical span at residues 379–399 (LMGCFLFGLPLGVISIMCYGI). The Cytoplasmic segment spans residues 400–456 (YTADTDGGYIEERYEVSKSEMENQEQIEESKEQESSSGGSLAPTVQEPKDVLEKKKD). Positions 416-456 (SKSEMENQEQIEESKEQESSSGGSLAPTVQEPKDVLEKKKD) are disordered. Residues 446-456 (EPKDVLEKKKD) are compositionally biased toward basic and acidic residues. A Di-lysine motif motif is present at residues 453-456 (KKKD).

Belongs to the protein disulfide isomerase family.

Its subcellular location is the endoplasmic reticulum membrane. The catalysed reaction is Catalyzes the rearrangement of -S-S- bonds in proteins.. Its function is as follows. Probable disulfide isomerase, which participates in the folding of proteins containing disulfide bonds. May act as a dithiol oxidase. Acts as a regulator of endoplasmic reticulum-mitochondria contact sites via its ability to regulate redox signals. The chain is Protein disulfide-isomerase TMX3 (Tmx3) from Mus musculus (Mouse).